The following is a 68-amino-acid chain: Large ribosomal subunit protein bL31 (68 aa).

Zn(2+) contacts are provided by cysteine 17, cysteine 19, cysteine 37, and cysteine 40.

This sequence belongs to the bacterial ribosomal protein bL31 family. Type A subfamily. As to quaternary structure, part of the 50S ribosomal subunit. The cofactor is Zn(2+).

Functionally, binds the 23S rRNA. The sequence is that of Large ribosomal subunit protein bL31 from Clostridium perfringens (strain ATCC 13124 / DSM 756 / JCM 1290 / NCIMB 6125 / NCTC 8237 / Type A).